A 273-amino-acid chain; its full sequence is tRNA (guanine-N(7)-)-methyltransferase A (273 aa).

G86, E109, R111, N142, A143, and L162 together coordinate S-adenosyl-L-methionine. D165 is a catalytic residue. Residues 166–174 (PHFKKTKHK) form an alphaC helix region. Residues T240 and E242 each contribute to the S-adenosyl-L-methionine site. The tract at residues 240 to 248 (TEEGKKVQR) is alpha6 helix.

This sequence belongs to the class I-like SAM-binding methyltransferase superfamily. TrmB family. In terms of assembly, catalytic component of the METTL1-WDR4 complex, composed of mettl1 and wdr4.

The protein localises to the nucleus. It catalyses the reaction guanosine(46) in tRNA + S-adenosyl-L-methionine = N(7)-methylguanosine(46) in tRNA + S-adenosyl-L-homocysteine. The enzyme catalyses a guanosine in mRNA + S-adenosyl-L-methionine = an N(7)-methylguanosine in mRNA + S-adenosyl-L-homocysteine. The catalysed reaction is a guanosine in miRNA + S-adenosyl-L-methionine = an N(7)-methylguanosine in miRNA + S-adenosyl-L-homocysteine. It participates in tRNA modification; N(7)-methylguanine-tRNA biosynthesis. Its function is as follows. Catalytic component of METTL1-WDR4 methyltransferase complex that mediates the formation of N(7)-methylguanine in a subset of RNA species, such as tRNAs, mRNAs and microRNAs (miRNAs). Catalyzes the formation of N(7)-methylguanine at position 46 (m7G46) in a large subset of tRNAs that contain the 5'-RAGGU-3' motif within the variable loop. M7G46 interacts with C13-G22 in the D-loop to stabilize tRNA tertiary structure and protect tRNAs from decay. Also acts as a methyltransferase for a subset of internal N(7)-methylguanine in mRNAs. Internal N(7)-methylguanine methylation of mRNAs in response to stress promotes their relocalization to stress granules, thereby suppressing their translation. Also methylates a specific subset of miRNAs. The chain is tRNA (guanine-N(7)-)-methyltransferase A (mettl1-A) from Xenopus tropicalis (Western clawed frog).